The primary structure comprises 455 residues: Argininosuccinate lyase (455 aa).

Belongs to the lyase 1 family. Argininosuccinate lyase subfamily.

The protein resides in the cytoplasm. The enzyme catalyses 2-(N(omega)-L-arginino)succinate = fumarate + L-arginine. It functions in the pathway amino-acid biosynthesis; L-arginine biosynthesis; L-arginine from L-ornithine and carbamoyl phosphate: step 3/3. In Roseiflexus castenholzii (strain DSM 13941 / HLO8), this protein is Argininosuccinate lyase.